A 903-amino-acid chain; its full sequence is E3 ubiquitin-protein ligase DDB_G0292642 (903 aa).

Disordered stretches follow at residues 115–137, 167–236, 284–366, 415–487, and 549–576; these read FTLP…SSSD, LLKR…VIGS, VNKT…NNLK, TPSL…TTEI, and DDSE…GSEG. 2 stretches are compositionally biased toward low complexity: residues 120–130 and 178–216; these read TTNNNNNNTTN and TTTT…TIDT. The segment covering 217-232 has biased composition (acidic residues); sequence SSEDDDESISSSDDDI. 2 stretches are compositionally biased toward low complexity: residues 287–301 and 311–323; these read TSTT…TTTT and NRNN…NNNN. The stretch at 313–352 forms a coiled coil; sequence NNNNNNNNNNNKRFEIESEEESETDISSEEEENNNNNNNN. Over residues 329–345 the composition is skewed to acidic residues; it reads ESEEESETDISSEEEEN. Low complexity predominate over residues 346–364; that stretch reads NNNNNNNSNNNNNSNNNNN. Residues 415–427 are compositionally biased toward polar residues; the sequence is TPSLRLSSAHLPN. Over residues 428-443 the composition is skewed to low complexity; the sequence is TTTTTTTTTTTTTTTT. 2 stretches are compositionally biased toward acidic residues: residues 451–466 and 549–568; these read NDDD…DSEI and DDSE…ESDS. The stretch at 542–569 forms a coiled coil; that stretch reads AELVFEYDDSEEEEEEEEEEEGEESDSE. The interval 612-832 is TRIAD supradomain; it reads EPVECKICYM…NEYPECFDRQ (221 aa). Residues cysteine 616, cysteine 619, cysteine 634, histidine 636, cysteine 639, cysteine 642, cysteine 661, cysteine 666, cysteine 704, cysteine 709, cysteine 725, cysteine 728, cysteine 733, cysteine 736, histidine 741, cysteine 746, cysteine 782, and cysteine 785 each contribute to the Zn(2+) site. The RING-type 1 zinc-finger motif lies at 616–666; the sequence is CKICYMEYDQSNEVFTLECDHVYCFDCITEHLRILITEGRVLDISCPHPQC. The segment at 683–746 adopts an IBR-type zinc-finger fold; sequence NWLKYQKFSM…GEYSHEGAKC (64 aa). The segment at 782–811 adopts an RING-type 2; atypical zinc-finger fold; sequence CPTCKSHIEKHDGCNHMTCINCQHQFCWLC. Residue cysteine 795 is part of the active site. Cysteine 800, cysteine 803, cysteine 808, cysteine 811, histidine 819, and cysteine 828 together coordinate Zn(2+). A helical membrane pass occupies residues 864 to 884; sequence TAAFTVGAPLLLIGGAVLLCV.

It belongs to the RBR family. RNF14 subfamily.

It localises to the membrane. The catalysed reaction is [E2 ubiquitin-conjugating enzyme]-S-ubiquitinyl-L-cysteine + [acceptor protein]-L-lysine = [E2 ubiquitin-conjugating enzyme]-L-cysteine + [acceptor protein]-N(6)-ubiquitinyl-L-lysine.. Its pathway is protein modification; protein ubiquitination. Functionally, E3 ubiquitin-protein ligase. The chain is E3 ubiquitin-protein ligase DDB_G0292642 from Dictyostelium discoideum (Social amoeba).